A 268-amino-acid polypeptide reads, in one-letter code: Tryptophan synthase alpha chain (268 aa).

Catalysis depends on proton acceptor residues glutamate 49 and aspartate 60.

Belongs to the TrpA family. Tetramer of two alpha and two beta chains.

The enzyme catalyses (1S,2R)-1-C-(indol-3-yl)glycerol 3-phosphate + L-serine = D-glyceraldehyde 3-phosphate + L-tryptophan + H2O. The protein operates within amino-acid biosynthesis; L-tryptophan biosynthesis; L-tryptophan from chorismate: step 5/5. The alpha subunit is responsible for the aldol cleavage of indoleglycerol phosphate to indole and glyceraldehyde 3-phosphate. This chain is Tryptophan synthase alpha chain, found in Escherichia coli O6:H1 (strain CFT073 / ATCC 700928 / UPEC).